Consider the following 574-residue polypeptide: Acetolactate synthase large subunit (574 aa).

Glu51 is a thiamine diphosphate binding site. Residues Arg153, 261–282, and 304–323 each bind FAD; these read HGTY…IGVR and DIDP…IVGN. The thiamine pyrophosphate binding stretch occupies residues 397-477; it reads QHQMFAALYY…ILILNLNNKS (81 aa). Positions 448 and 475 each coordinate Mg(2+).

Belongs to the TPP enzyme family. In terms of assembly, dimer of large and small chains. It depends on Mg(2+) as a cofactor. Thiamine diphosphate serves as cofactor.

It catalyses the reaction 2 pyruvate + H(+) = (2S)-2-acetolactate + CO2. Its pathway is amino-acid biosynthesis; L-isoleucine biosynthesis; L-isoleucine from 2-oxobutanoate: step 1/4. It functions in the pathway amino-acid biosynthesis; L-valine biosynthesis; L-valine from pyruvate: step 1/4. The protein is Acetolactate synthase large subunit (ilvI) of Buchnera aphidicola subsp. Schlechtendalia chinensis.